The primary structure comprises 148 residues: CDC25-like phosphatase YCH1 (148 aa).

N-acetylmethionine is present on methionine 1. The Rhodanese domain maps to 29-137 (LREPFQVVDV…WQSVYGDDES (109 aa)).

This sequence belongs to the MPI phosphatase family.

It is found in the cytoplasm. The protein resides in the nucleus. Protein phosphatase. This Saccharomyces cerevisiae (strain ATCC 204508 / S288c) (Baker's yeast) protein is CDC25-like phosphatase YCH1 (YCH1).